We begin with the raw amino-acid sequence, 219 residues long: Octanoyltransferase (219 aa).

A BPL/LPL catalytic domain is found at 24–212; it reads KFRRECILFL…NLNSFLGPIS (189 aa). Substrate is bound by residues 69 to 76, 140 to 142, and 153 to 155; these read RGGDFTAH, SIG, and GVA. Catalysis depends on Cys171, which acts as the Acyl-thioester intermediate.

Belongs to the LipB family.

It localises to the cytoplasm. It carries out the reaction octanoyl-[ACP] + L-lysyl-[protein] = N(6)-octanoyl-L-lysyl-[protein] + holo-[ACP] + H(+). It participates in protein modification; protein lipoylation via endogenous pathway; protein N(6)-(lipoyl)lysine from octanoyl-[acyl-carrier-protein]: step 1/2. In terms of biological role, catalyzes the transfer of endogenously produced octanoic acid from octanoyl-acyl-carrier-protein onto the lipoyl domains of lipoate-dependent enzymes. Lipoyl-ACP can also act as a substrate although octanoyl-ACP is likely to be the physiological substrate. The protein is Octanoyltransferase of Leptospira borgpetersenii serovar Hardjo-bovis (strain JB197).